We begin with the raw amino-acid sequence, 506 residues long: ATP synthase subunit alpha (506 aa).

Residue 170–177 (GDRQTGKT) coordinates ATP.

It belongs to the ATPase alpha/beta chains family. As to quaternary structure, F-type ATPases have 2 components, CF(1) - the catalytic core - and CF(0) - the membrane proton channel. CF(1) has five subunits: alpha(3), beta(3), gamma(1), delta(1), epsilon(1). CF(0) has four main subunits: a(1), b(1), b'(1) and c(9-12).

Its subcellular location is the cellular thylakoid membrane. It carries out the reaction ATP + H2O + 4 H(+)(in) = ADP + phosphate + 5 H(+)(out). Its function is as follows. Produces ATP from ADP in the presence of a proton gradient across the membrane. The alpha chain is a regulatory subunit. This is ATP synthase subunit alpha from Synechococcus sp. (strain CC9311).